Consider the following 444-residue polypeptide: ATP-dependent protease ATPase subunit HslU (444 aa).

ATP-binding positions include isoleucine 20, 62 to 67 (GVGKTE), aspartate 257, glutamate 322, and arginine 394.

It belongs to the ClpX chaperone family. HslU subfamily. As to quaternary structure, a double ring-shaped homohexamer of HslV is capped on each side by a ring-shaped HslU homohexamer. The assembly of the HslU/HslV complex is dependent on binding of ATP.

Its subcellular location is the cytoplasm. ATPase subunit of a proteasome-like degradation complex; this subunit has chaperone activity. The binding of ATP and its subsequent hydrolysis by HslU are essential for unfolding of protein substrates subsequently hydrolyzed by HslV. HslU recognizes the N-terminal part of its protein substrates and unfolds these before they are guided to HslV for hydrolysis. The sequence is that of ATP-dependent protease ATPase subunit HslU from Bordetella avium (strain 197N).